The following is a 121-amino-acid chain: Holo-[acyl-carrier-protein] synthase (121 aa).

The Mg(2+) site is built by aspartate 5 and glutamate 50.

It belongs to the P-Pant transferase superfamily. AcpS family. The cofactor is Mg(2+).

Its subcellular location is the cytoplasm. It catalyses the reaction apo-[ACP] + CoA = holo-[ACP] + adenosine 3',5'-bisphosphate + H(+). Its function is as follows. Transfers the 4'-phosphopantetheine moiety from coenzyme A to a Ser of acyl-carrier-protein. The sequence is that of Holo-[acyl-carrier-protein] synthase from Sulfurimonas denitrificans (strain ATCC 33889 / DSM 1251) (Thiomicrospira denitrificans (strain ATCC 33889 / DSM 1251)).